The following is a 1103-amino-acid chain: Retinal guanylyl cyclase 1 (1103 aa).

The first 51 residues, 1–51 (MTACARRAGGLPDPGLCGPAWWAPSLPRLPRALPRLPLLLLLLLLQPPALS), serve as a signal peptide directing secretion. The Extracellular portion of the chain corresponds to 52–462 (AVFTVGVLGP…PNNICGGGLE (411 aa)). Asn297 is a glycosylation site (N-linked (GlcNAc...) asparagine). A helical membrane pass occupies residues 463–487 (PGLVFLGFLLVVGMGLAGAFLAHYV). Residues 488-1103 (RHRLLHMQMV…LEKARPGQFS (616 aa)) lie on the Cytoplasmic side of the membrane. Positions 525 to 808 (QGSRSSLGAR…DHTFDLFKNI (284 aa)) constitute a Protein kinase domain. The 131-residue stretch at 880 to 1010 (TLYFSDIVGF…DTVNTASRME (131 aa)) folds into the Guanylate cyclase domain. The disordered stretch occupies residues 1065–1103 (PIPKPPDLQPGSSNHGISLQEIPPERRRKLEKARPGQFS).

This sequence belongs to the adenylyl cyclase class-4/guanylyl cyclase family. As to quaternary structure, homodimer; requires homodimerization for guanylyl cyclase activity. Interacts with RD3; promotes the exit of GUCY2D from the endoplasmic reticulum and its trafficking to the photoreceptor outer segments. Interaction with RD3 negatively regulates guanylate cyclase activity. As to expression, retina.

It is found in the photoreceptor outer segment membrane. It localises to the endoplasmic reticulum membrane. It carries out the reaction GTP = 3',5'-cyclic GMP + diphosphate. Its activity is regulated as follows. Activated by GUCA1A when free calcium ions concentration is low, and inhibited by GUCA1A when free calcium ions concentration is high. Negatively regulated by RD3; inhibits the basal and GUCA1A-stimulated guanylate cyclase activity. In terms of biological role, catalyzes the synthesis of cyclic GMP (cGMP) in rods and cones of photoreceptors. Plays an essential role in phototransduction, by mediating cGMP replenishment. May also participate in the trafficking of membrane-asociated proteins to the photoreceptor outer segment membrane. The polypeptide is Retinal guanylyl cyclase 1 (GUCY2D) (Homo sapiens (Human)).